Consider the following 590-residue polypeptide: DELLA protein GAI1 (590 aa).

The span at 1–10 (MKREYHHPHH) shows a compositional bias: basic residues. The segment at 1-28 (MKREYHHPHHPTCSTSPTGKGKMWDADP) is disordered. A DELLA motif motif is present at residues 35–39 (DELLA). The segment at 153–182 (HIEQPPQQPPAPPLYQRDNKRLKPTTSATA) is disordered. One can recognise a GRAS domain in the interval 205–575 (VDSQETGIRL…RPLIATSAWQ (371 aa)). The segment at 212–266 (IRLVHTLMACAEAVQQENLKLAEALVKQIGFLAVSQAGAMRKVATYFAEGLARRI) is leucine repeat I (LRI). Positions 284–349 (QMHFYETCPY…GGPPSFRLTG (66 aa)) are VHIID. A VHIID motif is present at residues 315-319 (VHVID). A leucine repeat II (LRII) region spans residues 363–395 (EVGWKLAQLAETIHVEFEYRGFVANSLADLDAS). A PFYRE region spans residues 405–496 (VAVNSVFELH…EVYLGQQICN (92 aa)). The LXXLL motif signature appears at 413 to 417 (LHSLL). Residues 499–575 (ACEGPERVER…RPLIATSAWQ (77 aa)) are SAW.

It belongs to the GRAS family. DELLA subfamily. Post-translationally, phosphorylated. In terms of processing, ubiquitinated. Upon GA application it is ubiquitinated, leading to its subsequent degradation.

The protein localises to the nucleus. Functionally, probable transcriptional regulator that acts as a repressor of the gibberellin (GA) signaling pathway. Probably acts by participating in large multiprotein complexes that repress transcription of GA-inducible genes. Upon GA application, it is degraded by the proteasome, allowing the GA signaling pathway. This is DELLA protein GAI1 (GAI1) from Vitis vinifera (Grape).